The chain runs to 111 residues: Transcription initiation factor IIA subunit 2 (111 aa).

This sequence belongs to the TFIIA subunit 2 family. TFIIA is a heterodimer of the large unprocessed subunit 1 and a small subunit gamma. It was originally believed to be a heterotrimer of an alpha, a beta and a gamma subunit. Interacts with NCOA6 general coactivator. TFIIA forms a complex with TBP.

It is found in the nucleus. Functionally, TFIIA is a component of the transcription machinery of RNA polymerase II and plays an important role in transcriptional activation. TFIIA in a complex with TBP mediates transcriptional activity. The protein is Transcription initiation factor IIA subunit 2 (gtf2a2) of Paralichthys olivaceus (Bastard halibut).